The chain runs to 262 residues: Serine O-acetyltransferase (262 aa).

Catalysis depends on cysteine 107, which acts as the Acyl-thioester intermediate. Lysine 128 is a substrate binding site. Histidine 200 (proton acceptor) is an active-site residue. Glutamate 202 is an active-site residue. Residue arginine 214 coordinates substrate.

This sequence belongs to the MetA family.

Its subcellular location is the cytoplasm. It catalyses the reaction L-serine + acetyl-CoA = O-acetyl-L-serine + CoA. It carries out the reaction L-homoserine + acetyl-CoA = O-acetyl-L-homoserine + CoA. It functions in the pathway amino-acid biosynthesis; L-cysteine biosynthesis; L-cysteine from L-serine: step 1/2. In terms of biological role, transfers an acetyl group from acetyl-CoA to L-serine, forming acetyl-L-serine. In vitro, also has homoserine acetyl transferase activity. The chain is Serine O-acetyltransferase from Lactobacillus acidophilus.